Here is a 197-residue protein sequence, read N- to C-terminus: HTH-type transcriptional regulator BetI (197 aa).

Residues 8-68 form the HTH tetR-type domain; it reads PIRRQQLIQA…ATMRHLMNAL (61 aa). The H-T-H motif DNA-binding region spans 31–50; the sequence is SIALIARLAGVSNGIISHYF.

Its pathway is amine and polyamine biosynthesis; betaine biosynthesis via choline pathway [regulation]. Repressor involved in the biosynthesis of the osmoprotectant glycine betaine. It represses transcription of the choline transporter BetT and the genes of BetAB involved in the synthesis of glycine betaine. The chain is HTH-type transcriptional regulator BetI from Pseudomonas savastanoi pv. phaseolicola (strain 1448A / Race 6) (Pseudomonas syringae pv. phaseolicola (strain 1448A / Race 6)).